The chain runs to 539 residues: Fusion glycoprotein F0 (539 aa).

Residues 1 to 18 form the signal peptide; that stretch reads MPTSILLIITTMIMASFC. At 19–493 the chain is on the extracellular side; the sequence is QIDITKLQHV…IGNWHQSSTT (475 aa). C63 and C192 are disulfide-bonded. Residues 110–134 are fusion peptide; that stretch reads FFGGVIGTIALGVATSAQITAAVAL. A coiled-coil region spans residues 135 to 163; the sequence is VEAKQARSDIEKLKEAIRDTNKAVQSVQS. Residue N238 is glycosylated (N-linked (GlcNAc...) asparagine; by host). 4 disulfides stabilise this stretch: C331–C340, C355–C363, C387–C392, and C394–C417. N359 carries N-linked (GlcNAc...) asparagine; by host glycosylation. N-linked (GlcNAc...) asparagine; by host glycosylation is present at N446. Residues 459–484 are a coiled coil; sequence ELNKAKSDLEESKEWIRRSNQKLDSI. Residues 494 to 514 traverse the membrane as a helical segment; that stretch reads IIIVLIMIIILFIINVTIIII. Residues 515–539 lie on the Cytoplasmic side of the membrane; the sequence is AVKYYRIQKRNRVDQNDKPYVLTNK.

The protein belongs to the paramyxoviruses fusion glycoprotein family. Homotrimer of disulfide-linked F1-F2. Post-translationally, the inactive precursor F0 is glycosylated and proteolytically cleaved into F1 and F2 to be functionally active. The cleavage is mediated by cellular proteases during the transport and maturation of the polypeptide.

It localises to the virion membrane. It is found in the host cell membrane. Its function is as follows. Class I viral fusion protein. Under the current model, the protein has at least 3 conformational states: pre-fusion native state, pre-hairpin intermediate state, and post-fusion hairpin state. During viral and plasma cell membrane fusion, the heptad repeat (HR) regions assume a trimer-of-hairpins structure, positioning the fusion peptide in close proximity to the C-terminal region of the ectodomain. The formation of this structure appears to drive apposition and subsequent fusion of viral and plasma cell membranes. Directs fusion of viral and cellular membranes leading to delivery of the nucleocapsid into the cytoplasm. This fusion is pH independent and occurs directly at the outer cell membrane. The trimer of F1-F2 (F protein) probably interacts with HN at the virion surface. Upon HN binding to its cellular receptor, the hydrophobic fusion peptide is unmasked and interacts with the cellular membrane, inducing the fusion between cell and virion membranes. Later in infection, F proteins expressed at the plasma membrane of infected cells could mediate fusion with adjacent cells to form syncytia, a cytopathic effect that could lead to tissue necrosis. The chain is Fusion glycoprotein F0 (F) from Homo sapiens (Human).